The chain runs to 236 residues: Small ribosomal subunit protein uS2c (236 aa).

The protein belongs to the universal ribosomal protein uS2 family.

It is found in the plastid. It localises to the chloroplast. This is Small ribosomal subunit protein uS2c (rps2) from Oryza sativa (Rice).